Reading from the N-terminus, the 86-residue chain is Small ribosomal subunit protein uS17 (86 aa).

Belongs to the universal ribosomal protein uS17 family. Part of the 30S ribosomal subunit.

Its function is as follows. One of the primary rRNA binding proteins, it binds specifically to the 5'-end of 16S ribosomal RNA. The chain is Small ribosomal subunit protein uS17 from Bifidobacterium longum (strain DJO10A).